The following is a 125-amino-acid chain: Large ribosomal subunit protein bL12 (125 aa).

This sequence belongs to the bacterial ribosomal protein bL12 family. In terms of assembly, homodimer. Part of the ribosomal stalk of the 50S ribosomal subunit. Forms a multimeric L10(L12)X complex, where L10 forms an elongated spine to which 2 to 4 L12 dimers bind in a sequential fashion. Binds GTP-bound translation factors.

Its function is as follows. Forms part of the ribosomal stalk which helps the ribosome interact with GTP-bound translation factors. Is thus essential for accurate translation. The protein is Large ribosomal subunit protein bL12 of Bradyrhizobium sp. (strain ORS 278).